The chain runs to 252 residues: Protein GrpE (252 aa).

The span at 1–22 shows a compositional bias: polar residues; sequence MHNPQSRGHNLSQAMSDQTVTN. The tract at residues 1-70 is disordered; it reads MHNPQSRGHN…EEDQASEATS (70 aa).

Belongs to the GrpE family. As to quaternary structure, homodimer.

It is found in the cytoplasm. Participates actively in the response to hyperosmotic and heat shock by preventing the aggregation of stress-denatured proteins, in association with DnaK and GrpE. It is the nucleotide exchange factor for DnaK and may function as a thermosensor. Unfolded proteins bind initially to DnaJ; upon interaction with the DnaJ-bound protein, DnaK hydrolyzes its bound ATP, resulting in the formation of a stable complex. GrpE releases ADP from DnaK; ATP binding to DnaK triggers the release of the substrate protein, thus completing the reaction cycle. Several rounds of ATP-dependent interactions between DnaJ, DnaK and GrpE are required for fully efficient folding. The chain is Protein GrpE from Thermosynechococcus vestitus (strain NIES-2133 / IAM M-273 / BP-1).